Consider the following 431-residue polypeptide: Keratin, type I cytoskeletal 18 (431 aa).

The interval S2–N83 is head. S12 carries the post-translational modification Phosphoserine. T13 is modified (phosphothreonine). Phosphoserine occurs at positions 22 and 36. The segment at E84 to A119 is coil 1A. Positions E84–L395 constitute an IF rod domain. The interval L120–I136 is linker 1. Positions V137 to L228 are coil 1B. The segment at R229 to I252 is linker 12. The coil 2 stretch occupies residues M253 to G390. The segment at G391 to L431 is tail.

It belongs to the intermediate filament family. In terms of assembly, heterotetramer of two type I and two type II keratins. Keratin-18 associates with keratin-8. Proteolytically cleaved by caspases during epithelial cell apoptosis. Expressed in simple epithelia such as intestinal mucosa, bile duct, hepatocytes, renal tubules, endothelia, ocular lens epithelium, and in a variety of mesenchymally-derived cells such as blood vessel endothelia, pillar gill cells, optic nerve glial cells, fibroblasts, interstitial cells, chondrocytes and ovarian theca cells. Also expressed in epidermis, pharyngeal mucosa, mucosa of anterior esophagus, gill mucosa and cornea.

Its function is as follows. When phosphorylated, plays a role in filament reorganization. The sequence is that of Keratin, type I cytoskeletal 18 from Danio rerio (Zebrafish).